The primary structure comprises 248 residues: 1-(5-phosphoribosyl)-5-[(5-phosphoribosylamino)methylideneamino] imidazole-4-carboxamide isomerase (248 aa).

Aspartate 8 (proton acceptor) is an active-site residue. Aspartate 131 acts as the Proton donor in catalysis.

Belongs to the HisA/HisF family.

The protein resides in the cytoplasm. The catalysed reaction is 1-(5-phospho-beta-D-ribosyl)-5-[(5-phospho-beta-D-ribosylamino)methylideneamino]imidazole-4-carboxamide = 5-[(5-phospho-1-deoxy-D-ribulos-1-ylimino)methylamino]-1-(5-phospho-beta-D-ribosyl)imidazole-4-carboxamide. The protein operates within amino-acid biosynthesis; L-histidine biosynthesis; L-histidine from 5-phospho-alpha-D-ribose 1-diphosphate: step 4/9. This is 1-(5-phosphoribosyl)-5-[(5-phosphoribosylamino)methylideneamino] imidazole-4-carboxamide isomerase from Cupriavidus necator (strain ATCC 17699 / DSM 428 / KCTC 22496 / NCIMB 10442 / H16 / Stanier 337) (Ralstonia eutropha).